The chain runs to 347 residues: UPF0284 protein M1627_0030 (347 aa).

This sequence belongs to the UPF0284 family.

The polypeptide is UPF0284 protein M1627_0030 (Saccharolobus islandicus (strain M.16.27) (Sulfolobus islandicus)).